The chain runs to 178 residues: Large ribosomal subunit protein uL6 (178 aa).

Belongs to the universal ribosomal protein uL6 family. Part of the 50S ribosomal subunit.

This protein binds to the 23S rRNA, and is important in its secondary structure. It is located near the subunit interface in the base of the L7/L12 stalk, and near the tRNA binding site of the peptidyltransferase center. The chain is Large ribosomal subunit protein uL6 from Leifsonia xyli subsp. xyli (strain CTCB07).